The sequence spans 142 residues: Domesticated amidase effector 2 (142 aa).

The N-terminal stretch at 1–35 is a signal peptide; that stretch reads MKLFLISAALVVLGLAAVADAIGCSDPSPFQGRWV. Catalysis depends on residues cysteine 43 and histidine 94.

It belongs to the cell wall amidase Dae2/Tae2-like family. May be post-translationally modified, since the saliva wild-type protein is slightly heavier than the recombinant one. In terms of tissue distribution, detected in salivary glands and in the gut (at protein level).

It is found in the secreted. Its function is as follows. Tick gut and saliva antibacterial peptide that directly antagonizes host skin commensals which enter the ticks during feeding. Acts as a cell wall hydrolase that cleaves the bond between gamma-D-glutamate-meso-diaminopimelate of a peptide stem and D-alanine of another peptide stem in peptidoglycans. In vitro, degrades peptidoglycans from both Gram-negative and Gram-positive bacteria. Is not able to traverse the protective outer membrane of Gram-negative bacteria. Is not able to kill Borrelia burgdorferi, one of the Lyme disease-causing bacteria. In Ixodes scapularis (Black-legged tick), this protein is Domesticated amidase effector 2.